Consider the following 459-residue polypeptide: Septin-4 (459 aa).

Residues Ser-10, Ser-49, Ser-98, and Ser-99 each carry the phosphoserine modification. Disordered regions lie at residues 18-52 (FVKDFPGSEPCHPTESKTRVARPQILEPRPQSPDL) and 70-98 (SQQYFCPPAPLSPSSRPRSPWGKLDPYDS). Residues 122 to 395 (KGFDFTLMVA…ENYRAQCIQS (274 aa)) enclose the Septin-type G domain. Residues 132–139 (GESGLGKS) are G1 motif. Residues 132 to 139 (GESGLGKS) and Thr-166 each bind GTP. A G3 motif region spans residues 189-192 (DTPG). Residues 270-273 (AKAD) are G4 motif. 271–279 (KADTLTPSE) contacts GTP. Ser-306 is modified (phosphoserine). Residues Gly-329 and Arg-344 each coordinate GTP. The segment at 410–430 (TRESGTDFPIPAVPPGTDPET) is disordered. Residue Ser-413 is modified to Phosphoserine. Thr-415 is subject to Phosphothreonine. Residues 434–459 (IREKDEELRRMQEMLHKIQRQMKETH) are a coiled coil.

Belongs to the TRAFAC class TrmE-Era-EngA-EngB-Septin-like GTPase superfamily. Septin GTPase family. In terms of assembly, septins polymerize into heterooligomeric protein complexes that form filaments, and can associate with cellular membranes, actin filaments and microtubules. GTPase activity is required for filament formation. Interacts with SEPTIN8. Component of a septin core octameric complex consisting of SEPTIN12, SEPTIN7, SEPTIN6 and SEPTIN2 or SEPTIN4 in the order 12-7-6-2-2-6-7-12 or 12-7-6-4-4-6-7-12. Interacts with SEPTIN14 (via C-terminus). Interacts with DYRK1A. Interacts with SLC6A3/DAT and SNCA/alpha-synuclein. Interacts with STX1A; in the striatum. Interacts with XIAP (via BIR3 domain) following the induction of apoptosis. Interacts with AREL1 (via HECT domain); in the cytoplasm following induction of apoptosis. Post-translationally, phosphorylated by DYRK1A.

The protein resides in the cytoplasm. The protein localises to the cell projection. It localises to the cilium. It is found in the flagellum. Its subcellular location is the cytoplasmic vesicle. The protein resides in the secretory vesicle. The protein localises to the axon. It localises to the dendrite. It is found in the perikaryon. Functionally, filament-forming cytoskeletal GTPase. Pro-apoptotic protein involved in LGR5-positive intestinal stem cell and Paneth cell expansion in the intestines, via its interaction with XIAP. May also play a role in the regulation of cell fate in the intestine. Positive regulator of apoptosis involved in hematopoietic stem cell homeostasis; via its interaction with XIAP. Negative regulator of repair and hair follicle regeneration in response to injury, due to inhibition of hair follicle stem cell proliferation, potentially via its interaction with XIAP. Plays an important role in male fertility and sperm motility. During spermiogenesis, essential for the establishment of the annulus (a fibrous ring structure connecting the midpiece and the principal piece of the sperm flagellum) which is a requisite for the structural and mechanical integrity of the sperm. Involved in the migration of cortical neurons and the formation of neuron leading processes during embryonic development. Required for dopaminergic metabolism in presynaptic autoreceptors; potentially via activity as a presynaptic scaffold protein. This chain is Septin-4, found in Rattus norvegicus (Rat).